The sequence spans 929 residues: Isoleucine--tRNA ligase (929 aa).

Positions 58-68 (PYANGDIHIGH) match the 'HIGH' region motif. An L-isoleucyl-5'-AMP-binding site is contributed by Glu-563. The 'KMSKS' region motif lies at 605–609 (KMSKS). An ATP-binding site is contributed by Lys-608. Zn(2+)-binding residues include Cys-892, Cys-895, Cys-912, and Cys-915.

It belongs to the class-I aminoacyl-tRNA synthetase family. IleS type 1 subfamily. In terms of assembly, monomer. Zn(2+) is required as a cofactor.

The protein localises to the cytoplasm. The catalysed reaction is tRNA(Ile) + L-isoleucine + ATP = L-isoleucyl-tRNA(Ile) + AMP + diphosphate. Its function is as follows. Catalyzes the attachment of isoleucine to tRNA(Ile). As IleRS can inadvertently accommodate and process structurally similar amino acids such as valine, to avoid such errors it has two additional distinct tRNA(Ile)-dependent editing activities. One activity is designated as 'pretransfer' editing and involves the hydrolysis of activated Val-AMP. The other activity is designated 'posttransfer' editing and involves deacylation of mischarged Val-tRNA(Ile). The chain is Isoleucine--tRNA ligase from Neisseria gonorrhoeae (strain NCCP11945).